Here is a 129-residue protein sequence, read N- to C-terminus: Small ribosomal subunit protein uS9 (129 aa).

A disordered region spans residues 108–129; it reads RMVERKKYGKKKARKSFQFSKR. The span at 114–129 shows a compositional bias: basic residues; the sequence is KYGKKKARKSFQFSKR.

It belongs to the universal ribosomal protein uS9 family.

The polypeptide is Small ribosomal subunit protein uS9 (Chlorobaculum tepidum (strain ATCC 49652 / DSM 12025 / NBRC 103806 / TLS) (Chlorobium tepidum)).